The following is a 270-amino-acid chain: Formamidopyrimidine-DNA glycosylase (270 aa).

Catalysis depends on P2, which acts as the Schiff-base intermediate with DNA. Catalysis depends on E3, which acts as the Proton donor. Residue K58 is the Proton donor; for beta-elimination activity of the active site. H91, R110, and K151 together coordinate DNA. The FPG-type zinc-finger motif lies at 236 to 270; sequence FAYGRGGQPCKVCGTTLREIKLGQRASVYCPKCQR. R260 (proton donor; for delta-elimination activity) is an active-site residue.

The protein belongs to the FPG family. In terms of assembly, monomer. Requires Zn(2+) as cofactor.

The catalysed reaction is Hydrolysis of DNA containing ring-opened 7-methylguanine residues, releasing 2,6-diamino-4-hydroxy-5-(N-methyl)formamidopyrimidine.. It carries out the reaction 2'-deoxyribonucleotide-(2'-deoxyribose 5'-phosphate)-2'-deoxyribonucleotide-DNA = a 3'-end 2'-deoxyribonucleotide-(2,3-dehydro-2,3-deoxyribose 5'-phosphate)-DNA + a 5'-end 5'-phospho-2'-deoxyribonucleoside-DNA + H(+). Involved in base excision repair of DNA damaged by oxidation or by mutagenic agents. Acts as a DNA glycosylase that recognizes and removes damaged bases. Has a preference for oxidized purines, such as 7,8-dihydro-8-oxoguanine (8-oxoG). Has AP (apurinic/apyrimidinic) lyase activity and introduces nicks in the DNA strand. Cleaves the DNA backbone by beta-delta elimination to generate a single-strand break at the site of the removed base with both 3'- and 5'-phosphates. This chain is Formamidopyrimidine-DNA glycosylase, found in Pseudomonas syringae pv. tomato (strain ATCC BAA-871 / DC3000).